The sequence spans 154 residues: Probable chemoreceptor glutamine deamidase CheD (154 aa).

Belongs to the CheD family.

The catalysed reaction is L-glutaminyl-[protein] + H2O = L-glutamyl-[protein] + NH4(+). Probably deamidates glutamine residues to glutamate on methyl-accepting chemotaxis receptors (MCPs), playing an important role in chemotaxis. In Methanococcus vannielii (strain ATCC 35089 / DSM 1224 / JCM 13029 / OCM 148 / SB), this protein is Probable chemoreceptor glutamine deamidase CheD.